The sequence spans 583 residues: Probable cysteine--tRNA ligase, mitochondrial (583 aa).

C82 contributes to the Zn(2+) binding site. G83 is an L-cysteine binding site. The 'HIGH' region signature appears at 84–94; the sequence is PTVYSSSHIGH. Position 123 (T123) interacts with L-cysteine. Positions 128-131 match the 'KIIK' region motif; it reads KIIN. Residues C271, H296, and E300 each coordinate Zn(2+). Residue H296 participates in L-cysteine binding. The 'KMSKS' region motif lies at 337–341; the sequence is KMSKS. Residue K340 coordinates ATP.

The protein belongs to the class-I aminoacyl-tRNA synthetase family. It depends on Zn(2+) as a cofactor.

It localises to the mitochondrion. The enzyme catalyses tRNA(Cys) + L-cysteine + ATP = L-cysteinyl-tRNA(Cys) + AMP + diphosphate. In terms of biological role, mitochondrial cysteine-specific aminoacyl-tRNA synthetase that catalyzes the ATP-dependent ligation of cysteine to tRNA(Cys). Functionally, in addition to its role as an aminoacyl-tRNA synthetase, has also cysteine persulfide synthase activity. Produces reactive persulfide species such as cysteine persulfide (CysSSH) from substrate cysteine and mediate direct incorporation of CysSSH into proteins during translations, resulting in protein persulfides and polysulfides. CysSSHs behave as potent antioxidants and cellular protectants. The polypeptide is Probable cysteine--tRNA ligase, mitochondrial (mcysS) (Dictyostelium discoideum (Social amoeba)).